A 521-amino-acid polypeptide reads, in one-letter code: Importin subunit alpha-3 (521 aa).

Ala2 bears the N-acetylalanine mark. In terms of domain architecture, IBB spans 2-58 (ADNEKLDNQRLKNFKNKGRDLETMRRQRNEVVVELRKNKRDEHLLKRRNVPQEDICE). The Nuclear localization signal signature appears at 43 to 52 (EHLLKRRNVP). Ser60 carries the phosphoserine modification. An ARM 1; truncated repeat occupies 66-106 (YRVQNTSLEAIVQNASSDNQGIQLSAVQAARKLLSSDRNPP). 8 ARM repeats span residues 107 to 149 (IDDL…TSEQ), 150 to 194 (TQAV…CRDY), 195 to 233 (VISL…HKDP), 234 to 278 (PPPM…EQIQ), 279 to 318 (MVID…TDEQ), 319 to 360 (TQVV…NQQQ), 361 to 400 (VQAV…ISGR), and 401 to 443 (KDQV…KMAE). An NLS binding site (major) region spans residues 137 to 229 (WALTNIASGT…VTWVMVNLCR (93 aa)). The segment at 306-394 (RAVGNIVTGT…QKEAAWAISN (89 aa)) is NLS binding site (minor). The stretch at 447–485 (ETIANLIEECGGLEKIEQLQNHENEDIYKLAYEIIDQFF) is one ARM 10; atypical repeat.

This sequence belongs to the importin alpha family. As to quaternary structure, forms a complex with importin subunit beta-1 (KPNB1). Interacts with SNAI1. Interacts with TALDO1 isoform 1. Interacts with CYB1. Detected more or less in all tissues examined (Ehrlich ascites tumor cells, testis, kidney, spleen, liver, heart, lung, thymus, skeletal muscle, cerebellum and brain (without cerebellum)). Multiple-sized transcripts were highly expressed, especially in testis.

The protein localises to the cytoplasm. It is found in the nucleus. In terms of biological role, functions in nuclear protein import as an adapter protein for nuclear receptor KPNB1. Binds specifically and directly to substrates containing either a simple or bipartite NLS motif. Docking of the importin/substrate complex to the nuclear pore complex (NPC) is mediated by KPNB1 through binding to nucleoporin FxFG repeats and the complex is subsequently translocated through the pore by an energy requiring, Ran-dependent mechanism. At the nucleoplasmic side of the NPC, Ran binds to importin-beta and the three components separate and importin-alpha and -beta are re-exported from the nucleus to the cytoplasm where GTP hydrolysis releases Ran from importin. The directionality of nuclear import is thought to be conferred by an asymmetric distribution of the GTP- and GDP-bound forms of Ran between the cytoplasm and nucleus. Mediates nuclear import of AARS1, MRTFA and RANBP3. The sequence is that of Importin subunit alpha-3 (Kpna4) from Mus musculus (Mouse).